The chain runs to 282 residues: MKNLIFFFKLFIHRFQQNKIAVYSGYLTYTTLLSLVPLIMVVFSVFTLLPIFEQATAQLKELVYDNFAPSAGDMVQQYLEMFVDNSKKMGIISIIGLVVVAVMLISSIDNALNEIWHNTKKRSVILSFVVYLAVLIFAPIFAGASIAISSYIFSLEMFSQDGLFSFSHHLLKFIPFVLTWLLFALVYLIVPNTQVKFRHAAVGALFAGVFFTLGKQIFIWYITTFPSYQAIYGALATIPIMIVWIHLSWQVVLLGGQFASVLKDMEMIKAGELANPLTEDRE.

Transmembrane regions (helical) follow at residues 32–52, 89–109, 124–144, 170–190, 202–222, and 234–254; these read LLSL…LPIF, MGII…SSID, VILS…FAGA, LLKF…YLIV, VGAL…IWYI, and ALAT…VVLL.

The protein belongs to the UPF0761 family.

It is found in the cell inner membrane. The sequence is that of UPF0761 membrane protein HAPS_1376 from Glaesserella parasuis serovar 5 (strain SH0165) (Haemophilus parasuis).